Reading from the N-terminus, the 179-residue chain is Large ribosomal subunit protein uL6 (179 aa).

It belongs to the universal ribosomal protein uL6 family. Part of the 50S ribosomal subunit.

This protein binds to the 23S rRNA, and is important in its secondary structure. It is located near the subunit interface in the base of the L7/L12 stalk, and near the tRNA binding site of the peptidyltransferase center. In Prochlorococcus marinus (strain SARG / CCMP1375 / SS120), this protein is Large ribosomal subunit protein uL6.